A 530-amino-acid chain; its full sequence is Autoinducer-2 kinase (530 aa).

This sequence belongs to the FGGY kinase family.

It localises to the cytoplasm. It catalyses the reaction (S)-4,5-dihydroxypentane-2,3-dione + ATP = (2S)-2-hydroxy-3,4-dioxopentyl phosphate + ADP + H(+). Its function is as follows. Catalyzes the phosphorylation of autoinducer-2 (AI-2) to phospho-AI-2, which subsequently inactivates the transcriptional regulator LsrR and leads to the transcription of the lsr operon. Phosphorylates the ring-open form of (S)-4,5-dihydroxypentane-2,3-dione (DPD), which is the precursor to all AI-2 signaling molecules, at the C5 position. The polypeptide is Autoinducer-2 kinase (Escherichia coli (strain SMS-3-5 / SECEC)).